The primary structure comprises 188 residues: Inosine triphosphate pyrophosphatase (188 aa).

Residue threonine 12–lysine 17 participates in ITP binding. Mg(2+) is bound at residue glutamate 40. ITP is bound by residues lysine 52, aspartate 68–threonine 69, lysine 85, phenylalanine 144–aspartate 147, lysine 165, and histidine 170–arginine 171.

Belongs to the HAM1 NTPase family. Homodimer. Mg(2+) is required as a cofactor. Requires Mn(2+) as cofactor.

It localises to the cytoplasm. The protein resides in the nucleus. The enzyme catalyses ITP + H2O = IMP + diphosphate + H(+). It catalyses the reaction dITP + H2O = dIMP + diphosphate + H(+). It carries out the reaction XTP + H2O = XMP + diphosphate + H(+). Its function is as follows. Pyrophosphatase that hydrolyzes non-canonical purine nucleotides such as inosine triphosphate (ITP), deoxyinosine triphosphate (dITP) or xanthosine 5'-triphosphate (XTP) to their respective monophosphate derivatives. The enzyme does not distinguish between the deoxy- and ribose forms. Probably excludes non-canonical purines from RNA and DNA precursor pools, thus preventing their incorporation into RNA and DNA and avoiding chromosomal lesions. In Podospora anserina (strain S / ATCC MYA-4624 / DSM 980 / FGSC 10383) (Pleurage anserina), this protein is Inosine triphosphate pyrophosphatase.